The chain runs to 931 residues: Bifunctional uridylyltransferase/uridylyl-removing enzyme (931 aa).

The segment at 1 to 383 is uridylyltransferase; the sequence is MDLATTNDAA…RPGTELRRVP (383 aa). Residues 384–739 are uridylyl-removing; sequence EGDDFIIDNN…VGFDEARGVT (356 aa). The HD domain maps to 499-622; sequence VDEHLLRCIG…VQSVEQMKLL (124 aa). 2 consecutive ACT domains span residues 740–822 and 851–931; these read ELTI…VVAR and VIEV…QSVG.

This sequence belongs to the GlnD family. Mg(2+) serves as cofactor.

It carries out the reaction [protein-PII]-L-tyrosine + UTP = [protein-PII]-uridylyl-L-tyrosine + diphosphate. It catalyses the reaction [protein-PII]-uridylyl-L-tyrosine + H2O = [protein-PII]-L-tyrosine + UMP + H(+). Uridylyltransferase (UTase) activity is inhibited by glutamine, while glutamine activates uridylyl-removing (UR) activity. Modifies, by uridylylation and deuridylylation, the PII regulatory proteins (GlnB and homologs), in response to the nitrogen status of the cell that GlnD senses through the glutamine level. Under low glutamine levels, catalyzes the conversion of the PII proteins and UTP to PII-UMP and PPi, while under higher glutamine levels, GlnD hydrolyzes PII-UMP to PII and UMP (deuridylylation). Thus, controls uridylylation state and activity of the PII proteins, and plays an important role in the regulation of nitrogen assimilation and metabolism. In Nitrobacter hamburgensis (strain DSM 10229 / NCIMB 13809 / X14), this protein is Bifunctional uridylyltransferase/uridylyl-removing enzyme.